A 178-amino-acid chain; its full sequence is Transcription antitermination protein NusB (178 aa).

This sequence belongs to the NusB family.

In terms of biological role, involved in transcription antitermination. Required for transcription of ribosomal RNA (rRNA) genes. Binds specifically to the boxA antiterminator sequence of the ribosomal RNA (rrn) operons. This Alkalilimnicola ehrlichii (strain ATCC BAA-1101 / DSM 17681 / MLHE-1) protein is Transcription antitermination protein NusB.